The primary structure comprises 122 residues: Mth938 domain-containing protein (122 aa).

Residues 6–122 (IASLSWGQMK…RVGGVFHSTC (117 aa)) are MTH138-like domain.

Belongs to the AAMDC family.

It is found in the cytoplasm. Functionally, may play a role in preadipocyte differentiation and adipogenesis. The polypeptide is Mth938 domain-containing protein (AAMDC) (Bos taurus (Bovine)).